A 219-amino-acid chain; its full sequence is Phosphatidylserine decarboxylase proenzyme (219 aa).

The Schiff-base intermediate with substrate; via pyruvic acid role is filled by serine 188. Serine 188 bears the Pyruvic acid (Ser); by autocatalysis mark.

This sequence belongs to the phosphatidylserine decarboxylase family. PSD-A subfamily. Heterodimer of a large membrane-associated beta subunit and a small pyruvoyl-containing alpha subunit. Requires pyruvate as cofactor. In terms of processing, is synthesized initially as an inactive proenzyme. Formation of the active enzyme involves a self-maturation process in which the active site pyruvoyl group is generated from an internal serine residue via an autocatalytic post-translational modification. Two non-identical subunits are generated from the proenzyme in this reaction, and the pyruvate is formed at the N-terminus of the alpha chain, which is derived from the carboxyl end of the proenzyme. The post-translation cleavage follows an unusual pathway, termed non-hydrolytic serinolysis, in which the side chain hydroxyl group of the serine supplies its oxygen atom to form the C-terminus of the beta chain, while the remainder of the serine residue undergoes an oxidative deamination to produce ammonia and the pyruvoyl prosthetic group on the alpha chain.

The protein localises to the cell membrane. It carries out the reaction a 1,2-diacyl-sn-glycero-3-phospho-L-serine + H(+) = a 1,2-diacyl-sn-glycero-3-phosphoethanolamine + CO2. Its pathway is phospholipid metabolism; phosphatidylethanolamine biosynthesis; phosphatidylethanolamine from CDP-diacylglycerol: step 2/2. Catalyzes the formation of phosphatidylethanolamine (PtdEtn) from phosphatidylserine (PtdSer). This is Phosphatidylserine decarboxylase proenzyme from Ruegeria pomeroyi (strain ATCC 700808 / DSM 15171 / DSS-3) (Silicibacter pomeroyi).